A 342-amino-acid chain; its full sequence is UHRF1-like protein (342 aa).

The disordered stretch occupies residues 41–149 (SEATTLATPS…SHPGSEEEDI (109 aa)). A compositionally biased stretch (polar residues) spans 42–59 (EATTLATPSNLKTAGNQR). Residues 74–90 (NRSDSPRKRPTKDREDL) are compositionally biased toward basic and acidic residues. Residues 115-141 (TREQVTFNSDRDTPNTPSRQIKSTHSH) show a composition bias toward polar residues. The YDG domain occupies 168–322 (GHIPGIGVGK…LMVCRYAFKR (155 aa)). Position 218 (Asp-218) interacts with DNA. Residues 236–257 (KGTKQNPKNLRTAPQTSHQSFD) form a disordered region. A compositionally biased stretch (polar residues) spans 238 to 257 (TKQNPKNLRTAPQTSHQSFD).

The protein resides in the nucleus. Its function is as follows. Involved in the maintenance of DNA methylation. Binds hemimethylated DNA. In Cryptococcus neoformans var. grubii serotype A (strain H99 / ATCC 208821 / CBS 10515 / FGSC 9487) (Filobasidiella neoformans var. grubii), this protein is UHRF1-like protein.